A 276-amino-acid polypeptide reads, in one-letter code: SRR1-like protein (276 aa).

At S30 the chain carries Phosphoserine. Y34 is subject to Phosphotyrosine.

Belongs to the SRR1 family.

Functionally, possible regulator involved in a circadian clock input pathway. The sequence is that of SRR1-like protein from Drosophila melanogaster (Fruit fly).